We begin with the raw amino-acid sequence, 489 residues long: Betaine aldehyde dehydrogenase (489 aa).

Residues T26 and D93 each contribute to the K(+) site. 150–152 (GAW) serves as a coordination point for NAD(+). K162 functions as the Charge relay system in the catalytic mechanism. 176–179 (KPSE) lines the NAD(+) pocket. K(+) is bound at residue V180. Residue 229-232 (GVET) participates in NAD(+) binding. A K(+)-binding site is contributed by L245. The active-site Proton acceptor is E251. 3 residues coordinate NAD(+): G253, C285, and E386. C285 serves as the catalytic Nucleophile. C285 bears the Cysteine sulfenic acid (-SOH) mark. K456 and G459 together coordinate K(+). The active-site Charge relay system is the E463.

Belongs to the aldehyde dehydrogenase family. In terms of assembly, dimer of dimers. Requires K(+) as cofactor.

It carries out the reaction betaine aldehyde + NAD(+) + H2O = glycine betaine + NADH + 2 H(+). Its pathway is amine and polyamine biosynthesis; betaine biosynthesis via choline pathway; betaine from betaine aldehyde: step 1/1. Functionally, involved in the biosynthesis of the osmoprotectant glycine betaine. Catalyzes the irreversible oxidation of betaine aldehyde to the corresponding acid. This Burkholderia pseudomallei (strain 1106a) protein is Betaine aldehyde dehydrogenase.